We begin with the raw amino-acid sequence, 243 residues long: Phosphoribosylaminoimidazole-succinocarboxamide synthase (243 aa).

It belongs to the SAICAR synthetase family.

It catalyses the reaction 5-amino-1-(5-phospho-D-ribosyl)imidazole-4-carboxylate + L-aspartate + ATP = (2S)-2-[5-amino-1-(5-phospho-beta-D-ribosyl)imidazole-4-carboxamido]succinate + ADP + phosphate + 2 H(+). Its pathway is purine metabolism; IMP biosynthesis via de novo pathway; 5-amino-1-(5-phospho-D-ribosyl)imidazole-4-carboxamide from 5-amino-1-(5-phospho-D-ribosyl)imidazole-4-carboxylate: step 1/2. The polypeptide is Phosphoribosylaminoimidazole-succinocarboxamide synthase (Prochlorococcus marinus (strain MIT 9211)).